The chain runs to 211 residues: Endo-1,4-beta-xylanase 4 (211 aa).

The first 16 residues, 1-16 (MKVTAAFAGLLVTAFA), serve as a signal peptide directing secretion. The 192-residue stretch at 19-210 (VPEPVLVSRS…GACSASVTIS (192 aa)) folds into the GH11 domain. The N-linked (GlcNAc...) asparagine glycan is linked to Asn-101. Glu-106 functions as the Nucleophile in the catalytic mechanism. The active-site Proton donor is the Glu-197.

This sequence belongs to the glycosyl hydrolase 11 (cellulase G) family.

It localises to the secreted. It catalyses the reaction Endohydrolysis of (1-&gt;4)-beta-D-xylosidic linkages in xylans.. Its pathway is glycan degradation; xylan degradation. Functionally, endo-1,4-beta-xylanase involved in the hydrolysis of xylan, a major structural heterogeneous polysaccharide found in plant biomass representing the second most abundant polysaccharide in the biosphere, after cellulose. The polypeptide is Endo-1,4-beta-xylanase 4 (XYN4) (Aspergillus niger).